The primary structure comprises 87 residues: Alpha-elapitoxin-Ls2a (87 aa).

A signal peptide spans 1–21; it reads MKTLLLTLVVVTIVCLDLGYT. Cystine bridges form between Cys-24–Cys-41, Cys-34–Cys-62, Cys-47–Cys-51, Cys-66–Cys-77, and Cys-78–Cys-83.

It belongs to the three-finger toxin family. Long-chain subfamily. Type II alpha-neurotoxin sub-subfamily. In terms of tissue distribution, expressed by the venom gland.

The protein localises to the secreted. Binds with high affinity to muscular (tested on Torpedo marmorata, Kd=1.6 nM) and neuronal (chimeric alpha-7/CHRNA7, Kd=3 nM) nicotinic acetylcholine receptor (nAChR) and inhibits acetylcholine from binding to the receptor, thereby impairing neuromuscular and neuronal transmission. Also shows a very weak inhibition on GABA(A) receptors. The toxin (10 uM) inhibits 83% of current in channels composed of alpha-1-beta-3-gamma-2 (GABRA1-GABRB3-GABRG2) subunits, 39% of current in channels composed of alpha-2-beta-2-gamma-2 (GABRA2-GABRB2-GABRG2) subunits, and 33% of current in channels composed of alpha-5-beta-2-gamma-2 (GABRA5-GABRB2-GABRG2) subunits. The chain is Alpha-elapitoxin-Ls2a from Laticauda semifasciata (Black-banded sea krait).